A 590-amino-acid polypeptide reads, in one-letter code: Sulfoacetaldehyde acetyltransferase (590 aa).

It belongs to the TPP enzyme family. Requires Mg(2+) as cofactor. The cofactor is thiamine diphosphate.

It localises to the cytoplasm. It catalyses the reaction acetyl phosphate + sulfite + H(+) = sulfoacetaldehyde + phosphate. The protein operates within organosulfur degradation; taurine degradation via aerobic pathway; acetyl phosphate and sulfite from taurine: step 2/2. This is Sulfoacetaldehyde acetyltransferase from Rhodobacter capsulatus (strain ATCC BAA-309 / NBRC 16581 / SB1003).